Consider the following 749-residue polypeptide: 1,4-alpha-glucan branching enzyme GlgB (749 aa).

Residue aspartate 415 is the Nucleophile of the active site. Glutamate 468 (proton donor) is an active-site residue.

This sequence belongs to the glycosyl hydrolase 13 family. GlgB subfamily. Monomer.

The catalysed reaction is Transfers a segment of a (1-&gt;4)-alpha-D-glucan chain to a primary hydroxy group in a similar glucan chain.. It functions in the pathway glycan biosynthesis; glycogen biosynthesis. Its function is as follows. Catalyzes the formation of the alpha-1,6-glucosidic linkages in glycogen by scission of a 1,4-alpha-linked oligosaccharide from growing alpha-1,4-glucan chains and the subsequent attachment of the oligosaccharide to the alpha-1,6 position. This Nitrosococcus oceani (strain ATCC 19707 / BCRC 17464 / JCM 30415 / NCIMB 11848 / C-107) protein is 1,4-alpha-glucan branching enzyme GlgB.